Consider the following 984-residue polypeptide: Mineralocorticoid receptor (984 aa).

Residues 1–602 (METKGYHSLP…STGSSRPSKI (602 aa)) form a modulating region. Positions 231-243 (QGTPLTCSPNVEN) are enriched in polar residues. Disordered stretches follow at residues 231-329 (QGTP…AAST) and 347-373 (GTSA…QEVP). Residues Ser250, Ser259, Ser283, Ser287, and Ser299 each carry the phosphoserine modification. The span at 259–291 (SPLSSPLSSMKSSISSPPSHCSVKSPVSSPNNV) shows a compositional bias: low complexity. The span at 292–329 (TLRSSVSSPANINNSRCSVSSPSNTNNRSTLSSPAAST) shows a compositional bias: polar residues. Zn(2+) is bound by residues Cys603, Cys606, Cys620, Cys623, Cys639, Cys645, Cys655, and Cys658. NR C4-type zinc fingers lie at residues 603–623 (CLVC…CGSC) and 639–663 (CAGR…LQKC). Residues 603–668 (CLVCGDEASG…RLQKCLQAGM (66 aa)) constitute a DNA-binding region (nuclear receptor). The hinge stretch occupies residues 669-725 (NLGARKSKKLGKLKGIHEEQPQQQQPPPPPPPPQSPEEGTTYIAPAKEPSVNTALVP). Residues 684–710 (IHEEQPQQQQPPPPPPPPQSPEEGTTY) are disordered. The span at 692-703 (QQPPPPPPPPQS) shows a compositional bias: pro residues. The NR LBD domain occupies 726-964 (QLSTISRALT…EFPAMLVEII (239 aa)). 21-hydroxyprogesterone contacts are provided by Asn770 and Gln776. Residues Asn770 and Gln776 each coordinate aldosterone. Positions 770 and 776 each coordinate progesterone. An important for coactivator binding region spans residues 782–785 (KWAK). Positions 817 and 945 each coordinate 21-hydroxyprogesterone. Residues Arg817 and Thr945 each contribute to the aldosterone site. Residues Arg817 and Thr945 each contribute to the progesterone site.

Belongs to the nuclear hormone receptor family. NR3 subfamily. As to quaternary structure, heteromultimeric cytoplasmic complex with HSP90, HSP70, and FKBP4, in the absence of ligand. After ligand binding, it translocates to the nucleus and binds to DNA as a homodimer and as a heterodimer with NR3C1. May interact with HSD11B2 in the absence of ligand. Binds the coactivators NCOA1, NCOA2, TIF1 and NRIP1. Post-translationally, phosphorylated. In terms of tissue distribution, ubiquitous. Highly expressed in distal tubules, convoluted tubules and cortical collecting duct in kidney, and in sweat glands. Detected at lower levels in cardiomyocytes, in epidermis and in colon enterocytes.

It is found in the cytoplasm. It localises to the nucleus. The protein resides in the endoplasmic reticulum membrane. Receptor for both mineralocorticoids (MC) such as aldosterone and glucocorticoids (GC) such as corticosterone or cortisol. Binds to mineralocorticoid response elements (MRE) and transactivates target genes. The effect of MC is to increase ion and water transport and thus raise extracellular fluid volume and blood pressure and lower potassium levels. The polypeptide is Mineralocorticoid receptor (NR3C2) (Homo sapiens (Human)).